Consider the following 230-residue polypeptide: Protein GrpE (230 aa).

2 disordered regions span residues 1–26 (MADE…DREA) and 209–230 (GVSK…EDNA). Residues 221–230 (NGASTSEDNA) show a composition bias toward polar residues.

It belongs to the GrpE family. In terms of assembly, homodimer.

It is found in the cytoplasm. Functionally, participates actively in the response to hyperosmotic and heat shock by preventing the aggregation of stress-denatured proteins, in association with DnaK and GrpE. It is the nucleotide exchange factor for DnaK and may function as a thermosensor. Unfolded proteins bind initially to DnaJ; upon interaction with the DnaJ-bound protein, DnaK hydrolyzes its bound ATP, resulting in the formation of a stable complex. GrpE releases ADP from DnaK; ATP binding to DnaK triggers the release of the substrate protein, thus completing the reaction cycle. Several rounds of ATP-dependent interactions between DnaJ, DnaK and GrpE are required for fully efficient folding. The sequence is that of Protein GrpE from Brucella suis biovar 1 (strain 1330).